The primary structure comprises 339 residues: Large ribosomal subunit protein uL10 (339 aa).

Residues 307–339 (VEEEKKEEKVEEEKEDEEASEEEALAGLSALFG) form a disordered region. Positions 308–318 (EEEKKEEKVEE) are enriched in basic and acidic residues. The span at 319 to 330 (EKEDEEASEEEA) shows a compositional bias: acidic residues.

It belongs to the universal ribosomal protein uL10 family. Part of the 50S ribosomal subunit. Forms part of the ribosomal stalk which helps the ribosome interact with GTP-bound translation factors. Forms a heptameric L10(L12)2(L12)2(L12)2 complex, where L10 forms an elongated spine to which the L12 dimers bind in a sequential fashion.

Functionally, forms part of the ribosomal stalk, playing a central role in the interaction of the ribosome with GTP-bound translation factors. This Pyrococcus furiosus (strain ATCC 43587 / DSM 3638 / JCM 8422 / Vc1) protein is Large ribosomal subunit protein uL10.